Reading from the N-terminus, the 427-residue chain is SAC3 domain-containing protein 1 (427 aa).

Composition is skewed to basic and acidic residues over residues 1 to 10 (MGRFKGENRS) and 117 to 127 (ADPKRTVKEYS). Disordered regions lie at residues 1 to 53 (MGRF…QDAV) and 101 to 143 (LHRL…LLRP). Positions 134–143 (PRPPPSLLRP) are enriched in pro residues. The PCI domain maps to 229-397 (QVQEGFGSLR…EGLPPPGAYH (169 aa)). Ser-425 bears the Phosphoserine mark.

The protein belongs to the SAC3 family. In terms of assembly, may be part of a SEM1-containing complex. Present in spleen cells (at protein level).

The protein localises to the cytoplasm. Its subcellular location is the cytoskeleton. It localises to the microtubule organizing center. It is found in the centrosome. The protein resides in the spindle. In terms of biological role, involved in centrosome duplication and mitotic progression. The polypeptide is SAC3 domain-containing protein 1 (Sac3d1) (Mus musculus (Mouse)).